The sequence spans 202 residues: Homeobox protein ceh-13 (202 aa).

2 disordered regions span residues 60–83 (PATASGLSPPASRSSNSSAELPTG) and 166–202 (RMKEKKREKEKAFLARNTWESNSPTSSCSGEDVKNFK). Over residues 63–81 (ASGLSPPASRSSNSSAELP) the composition is skewed to low complexity. Residues 114–173 (NGTNRTNFTTHQLTELEKEFHTAKYVNRTRRTEIASNLKLQEAQVKIWFQNRRMKEKKRE) constitute a DNA-binding region (homeobox). Over residues 183 to 194 (TWESNSPTSSCS) the composition is skewed to polar residues.

The protein resides in the nucleus. This chain is Homeobox protein ceh-13 (ceh-13), found in Caenorhabditis elegans.